The following is a 665-amino-acid chain: Cysteine-rich receptor-like protein kinase 26 (665 aa).

Residues 1-22 (MLSLLLPLISLLFQIQCFTVKS) form the signal peptide. The Extracellular portion of the chain corresponds to 23–283 (QPVPLNQICS…GDKNRGVPKA (261 aa)). 2 consecutive Gnk2-homologous domains span residues 26–129 (PLNQ…NRTI) and 135–244 (ISPH…PWRF). N-linked (GlcNAc...) asparagine glycans are attached at residues Asn33, Asn37, Asn67, Asn126, Asn146, and Asn266. Residues 251-275 (DDPSSVPATPSRPPKNETRSVTQGD) form a disordered region. Residues 284-304 (LIFASASVAIVVLFIVLLVVF) traverse the membrane as a helical segment. The Cytoplasmic segment spans residues 305-665 (LKLRRKENIR…YNSNTELYPR (361 aa)). Positions 344-624 (FSLENKLGEG…VLMLDGHTIA (281 aa)) constitute a Protein kinase domain. ATP is bound by residues 350–358 (LGEGGFGAV) and Lys372. Phosphotyrosine is present on Tyr417. The active-site Proton acceptor is Asp469. Position 473 is a phosphoserine (Ser473). A Phosphothreonine modification is found at Thr510. Phosphotyrosine is present on Tyr518. The interval 641-665 (SDSSSSLGHNAKTSNYNSNTELYPR) is disordered. The span at 647–665 (LGHNAKTSNYNSNTELYPR) shows a compositional bias: polar residues.

It belongs to the protein kinase superfamily. Ser/Thr protein kinase family. CRK subfamily.

It localises to the membrane. It carries out the reaction L-seryl-[protein] + ATP = O-phospho-L-seryl-[protein] + ADP + H(+). The catalysed reaction is L-threonyl-[protein] + ATP = O-phospho-L-threonyl-[protein] + ADP + H(+). This chain is Cysteine-rich receptor-like protein kinase 26 (CRK26), found in Arabidopsis thaliana (Mouse-ear cress).